The sequence spans 580 residues: tRNA-guanine(15) transglycosylase (580 aa).

Aspartate 91 functions as the Nucleophile in the catalytic mechanism. Aspartate 126 and alanine 192 together coordinate substrate. Cysteine 275, cysteine 277, and cysteine 280 together coordinate Zn(2+). The region spanning 504–579 (RMRVVVDEDA…LAVKVRRGVE (76 aa)) is the PUA domain.

This sequence belongs to the archaeosine tRNA-ribosyltransferase family. Zn(2+) serves as cofactor.

The enzyme catalyses guanosine(15) in tRNA + 7-cyano-7-deazaguanine = 7-cyano-7-carbaguanosine(15) in tRNA + guanine. The protein operates within tRNA modification; archaeosine-tRNA biosynthesis. In terms of biological role, exchanges the guanine residue with 7-cyano-7-deazaguanine (preQ0) at position 15 in the dihydrouridine loop (D-loop) of archaeal tRNAs. This is tRNA-guanine(15) transglycosylase from Thermococcus onnurineus (strain NA1).